The following is a 560-amino-acid chain: DNA ligase B (560 aa).

Lysine 128 acts as the N6-AMP-lysine intermediate in catalysis.

The protein belongs to the NAD-dependent DNA ligase family. LigB subfamily.

It carries out the reaction NAD(+) + (deoxyribonucleotide)n-3'-hydroxyl + 5'-phospho-(deoxyribonucleotide)m = (deoxyribonucleotide)n+m + AMP + beta-nicotinamide D-nucleotide.. Its function is as follows. Catalyzes the formation of phosphodiester linkages between 5'-phosphoryl and 3'-hydroxyl groups in double-stranded DNA using NAD as a coenzyme and as the energy source for the reaction. This chain is DNA ligase B, found in Azotobacter vinelandii (strain DJ / ATCC BAA-1303).